A 455-amino-acid polypeptide reads, in one-letter code: Nuclear mRNA export protein THP1 (455 aa).

Residues 220–431 (IEYRYLLGRY…QLCVVKKTTM (212 aa)) form the PCI domain.

In terms of assembly, heterodimer with THP1. The SAC3-THP1 complex interacts with CDC31 and SUS1, and with the mRNA export factor MEX67-MTR2, the TREX complex component SUB2, and the nucleoporin NUP1.

It is found in the nucleus envelope. Functionally, component of the SAC3-THP1 complex, which functions in transcription-coupled mRNA export from the nucleus to the cytoplasm. SAC3-THP1 functions in docking export-competent ribonucleoprotein particles (mRNPs) to the nuclear entrance of the nuclear pore complex (nuclear basket), by association with components of the nuclear mRNA export machinery (MEX67-MTR2 and SUB2) in the nucleoplasm and the nucleoporin NUP1 at the nuclear basket. THP1 binds to RNA in vitro. The protein is Nuclear mRNA export protein THP1 (THP1) of Saccharomyces cerevisiae (strain ATCC 204508 / S288c) (Baker's yeast).